Here is a 161-residue protein sequence, read N- to C-terminus: Phage-like element PBSX protein XkdI (161 aa).

This sequence to B.subtilis YqbI.

The protein is Phage-like element PBSX protein XkdI (xkdI) of Bacillus subtilis (strain 168).